The sequence spans 401 residues: 8-amino-7-oxononanoate synthase (401 aa).

Position 24 (Arg-24) interacts with substrate. 111–112 (GF) contributes to the pyridoxal 5'-phosphate binding site. His-137 is a substrate binding site. Residues Ser-183, His-211, and Thr-240 each contribute to the pyridoxal 5'-phosphate site. Lys-243 is subject to N6-(pyridoxal phosphate)lysine. Thr-357 is a substrate binding site.

Belongs to the class-II pyridoxal-phosphate-dependent aminotransferase family. BioF subfamily. In terms of assembly, homodimer. Pyridoxal 5'-phosphate is required as a cofactor.

It carries out the reaction 6-carboxyhexanoyl-[ACP] + L-alanine + H(+) = (8S)-8-amino-7-oxononanoate + holo-[ACP] + CO2. Its pathway is cofactor biosynthesis; biotin biosynthesis. Catalyzes the decarboxylative condensation of pimeloyl-[acyl-carrier protein] and L-alanine to produce 8-amino-7-oxononanoate (AON), [acyl-carrier protein], and carbon dioxide. The protein is 8-amino-7-oxononanoate synthase of Xylella fastidiosa (strain 9a5c).